The following is a 580-amino-acid chain: Rho guanine nucleotide exchange factor 25 (580 aa).

Positions 48–67 (AASGLAAPSGPSSGLSSGPC) are enriched in low complexity. Disordered regions lie at residues 48 to 76 (AASGLAAPSGPSSGLSSGPCSPGPPGPVS) and 128 to 157 (LEGPGDKTQPPEEETLSQAPESEEEQKKKA). The 177-residue stretch at 160–336 (RSMYVLSELV…CFVPKRCNDM (177 aa)) folds into the DH domain. An important for binding to Rho GTPases region spans residues 278–299 (LGHRLQLNDLLIKPVQRIMKYQ). Residues 348–466 (KLTAQGKLLG…WIKHVAQILE (119 aa)) form the PH domain. Positions 467–493 (SQRDFLNALQSPIEYQRRESQTNSLGR) are sufficient to bind activated GNAQ. Disordered regions lie at residues 482-524 (QRRE…GSLP) and 545-580 (ALGDIPQAPHDSPPVSPTPKTPPCQARLAKLDEDEL). The segment covering 509-520 (DQAQGSTHTPIN) has biased composition (polar residues). Residues 555–566 (DSPPVSPTPKTP) are compositionally biased toward pro residues.

In terms of assembly, interacts (via the DH domain) with POPDC1 (via the C-terminus cytoplasmic tail). Interacts with activated GNAQ and GNA11. Interacts with RHOA, CDC42 and RAC1. As to expression, isoform 1 and isoform 2 are highly expressed in excitable tissues, such as brain, heart and muscle. Also detected in kidney and liver.

The protein resides in the cell membrane. It localises to the cytoplasm. It is found in the myofibril. Its subcellular location is the sarcomere. Its function is as follows. May play a role in actin cytoskeleton reorganization in different tissues since its activation induces formation of actin stress fibers. It works as a guanine nucleotide exchange factor for Rho family of small GTPases. Links specifically G alpha q/11-coupled receptors to RHOA activation. May be an important regulator of processes involved in axon and dendrite formation. In neurons seems to be an exchange factor primarily for RAC1. Involved in skeletal myogenesis. This chain is Rho guanine nucleotide exchange factor 25 (ARHGEF25), found in Homo sapiens (Human).